The following is a 394-amino-acid chain: Actin-related protein 2-A (394 aa).

ATP contacts are provided by residues 160-162, 214-218, and 305-310; these read GDG, RMMKE, and GGSTMY.

The protein belongs to the actin family. ARP2 subfamily. Component of the Arp2/3 complex composed of actr2/arp2, actr3/arp3, arpc1b, arpc2, arpc3, arpc4 and arpc5.

It localises to the cytoplasm. The protein localises to the cytoskeleton. It is found in the cell projection. Its subcellular location is the nucleus. Functionally, ATP-binding component of the Arp2/3 complex, a multiprotein complex that mediates actin polymerization upon stimulation by nucleation-promoting factor (NPF). The Arp2/3 complex mediates the formation of branched actin networks in the cytoplasm, providing the force for cell motility. Seems to contact the pointed end of the daughter actin filament. In addition to its role in the cytoplasmic cytoskeleton, the Arp2/3 complex also promotes actin polymerization in the nucleus, thereby regulating gene transcription and repair of damaged DNA. The Arp2/3 complex promotes homologous recombination (HR) repair in response to DNA damage by promoting nuclear actin polymerization, leading to drive motility of double-strand breaks (DSBs). In Danio rerio (Zebrafish), this protein is Actin-related protein 2-A (actr2a).